A 310-amino-acid polypeptide reads, in one-letter code: Proline iminopeptidase (310 aa).

The AB hydrolase-1 domain maps to 33 to 290; sequence PVIFLHGGPG…RVVQAGHRAF (258 aa). S107 serves as the catalytic Nucleophile. D260 is an active-site residue. The active-site Proton donor is H287.

This sequence belongs to the peptidase S33 family.

It localises to the cytoplasm. The catalysed reaction is Release of N-terminal proline from a peptide.. Functionally, specifically catalyzes the removal of N-terminal proline residues from peptides. This Neisseria meningitidis serogroup A / serotype 4A (strain DSM 15465 / Z2491) protein is Proline iminopeptidase (pip).